We begin with the raw amino-acid sequence, 445 residues long: Branched-chain amino acid permease BraB (445 aa).

12 helical membrane passes run 11–31, 45–65, 79–99, 122–142, 158–178, 192–212, 233–253, 275–295, 311–331, 339–359, 375–395, and 415–435; these read IIIG…IYPP, IGGF…AIAL, PVFG…LFAI, LSLL…ALNP, FTII…GLGA, FLEG…VVVV, AGVI…YLGA, YLFG…ACLT, LIPA…SLII, IIAF…VIIV, IACL…AAGF, and IGWV…TLFI.

This sequence belongs to the branched chain amino acid transporter family.

Its subcellular location is the cell membrane. Branched-chain amino acid transport system which is involved in the uptake of isoleucine, valine and probably leucine. Together with BcaP and BrnQ, plays an important role in the activation of CodY, a branched-chain amino acid-responsive transcriptional regulator that controls the expression of several dozen transcription units in B.subtilis. The sequence is that of Branched-chain amino acid permease BraB from Bacillus subtilis (strain 168).